The following is a 228-amino-acid chain: 5'-methylthioadenosine/S-adenosylhomocysteine nucleosidase (228 aa).

The active-site Proton acceptor is E11. Substrate contacts are provided by residues G77, I151, and 172–173 (ME). D196 acts as the Proton donor in catalysis.

Belongs to the PNP/UDP phosphorylase family. MtnN subfamily.

The enzyme catalyses S-adenosyl-L-homocysteine + H2O = S-(5-deoxy-D-ribos-5-yl)-L-homocysteine + adenine. The catalysed reaction is S-methyl-5'-thioadenosine + H2O = 5-(methylsulfanyl)-D-ribose + adenine. It catalyses the reaction 5'-deoxyadenosine + H2O = 5-deoxy-D-ribose + adenine. Its pathway is amino-acid biosynthesis; L-methionine biosynthesis via salvage pathway; S-methyl-5-thio-alpha-D-ribose 1-phosphate from S-methyl-5'-thioadenosine (hydrolase route): step 1/2. Catalyzes the irreversible cleavage of the glycosidic bond in both 5'-methylthioadenosine (MTA) and S-adenosylhomocysteine (SAH/AdoHcy) to adenine and the corresponding thioribose, 5'-methylthioribose and S-ribosylhomocysteine, respectively. Also cleaves 5'-deoxyadenosine, a toxic by-product of radical S-adenosylmethionine (SAM) enzymes, into 5-deoxyribose and adenine. The sequence is that of 5'-methylthioadenosine/S-adenosylhomocysteine nucleosidase from Staphylococcus aureus (strain MRSA252).